A 726-amino-acid polypeptide reads, in one-letter code: Pyrroloquinoline quinone-dependent pyranose dehydrogenase (726 aa).

An N-terminal signal peptide occupies residues 1-18 (MRSSSLAWALGLVALANA). Residues M83 and Y108 each coordinate heme b. Cysteines 138 and 141 form a disulfide. N140 carries N-linked (GlcNAc...) asparagine glycosylation. Heme b-binding residues include R181 and H182. Residues 211–242 (PPLSGGAPTQPPTQQPPTTTAPPPPPPSSTFV) are disordered. Residues 219–238 (TQPPTQQPPTTTAPPPPPPS) show a composition bias toward pro residues. C244 and C302 are joined by a disulfide. Residues R273, H363, R430, and N431 each coordinate pyrroloquinoline quinone. Ca(2+) contacts are provided by S449 and D451. C492 and C525 are joined by a disulfide. Residue H539 participates in pyrroloquinoline quinone binding. The N-linked (GlcNAc...) asparagine glycan is linked to N551. Positions 560, 563, and 564 each coordinate pyrroloquinoline quinone. The cysteines at positions 611 and 619 are disulfide-linked. Position 621 (R621) interacts with pyrroloquinoline quinone. Pro residues predominate over residues 659 to 678 (ITQPPITTSPPTPTTPPVVQ). The interval 659-689 (ITQPPITTSPPTPTTPPVVQPPTTVAPPQAS) is disordered. Residues 679–689 (PPTTVAPPQAS) show a composition bias toward low complexity. Positions 688-724 (ASQTLWGQCGGQGWTGPTLCPANSVCRESNQWYSQCV) constitute a CBM1 domain.

Belongs to the sugar dehydrogenase AA12 family. Ca(2+) serves as cofactor. It depends on pyrroloquinoline quinone as a cofactor. Requires heme b as cofactor.

Its subcellular location is the secreted. Pyrroloquinoline quinone (PPQ)-dependent oxidoreductase that catalyzes the oxidation of various sugars including L-galactose, L-gulose, D-talose, D-arabinose, D-lyxose, L-fucose and D-glucosone. Shows significant activity toward the reverse-chair conformation of pyranoses. Shows little or no activity toward abundant sugars such as D-glucose, D-fructose, cellobiose, as well L-xylose and L-glucose. This enzyme is able to direct electrical communication with electrodes, without artificial electron mediators, thus allowing direct electron transfer (DET)-type bioelectrocatalysis. Exhibits binding affinity for insoluble cellulose. PDH does not oxidize cello-oligosaccharides but is able to activate the C-1-oxidizing Neurospora crassa LPMO9F and the C-4-oxidizing Neurospora crassa LPMO9C thanks to the electron-tranfer activity of the cytochrome domain and the localization of PDH in the vicinity of the LPMO substrates by the CBM1 domain. In Coprinopsis cinerea (strain Okayama-7 / 130 / ATCC MYA-4618 / FGSC 9003) (Inky cap fungus), this protein is Pyrroloquinoline quinone-dependent pyranose dehydrogenase.